Here is a 530-residue protein sequence, read N- to C-terminus: Lysine--tRNA ligase (530 aa).

Residues 28 to 36 (PSGHIHVGN) carry the 'HIGH' region motif. The short motif at 278-282 (PMSSS) is the 'KMSKS' region element.

It belongs to the class-I aminoacyl-tRNA synthetase family.

The protein resides in the cytoplasm. The catalysed reaction is tRNA(Lys) + L-lysine + ATP = L-lysyl-tRNA(Lys) + AMP + diphosphate. This Methanocaldococcus jannaschii (strain ATCC 43067 / DSM 2661 / JAL-1 / JCM 10045 / NBRC 100440) (Methanococcus jannaschii) protein is Lysine--tRNA ligase (lysS).